A 474-amino-acid polypeptide reads, in one-letter code: tRNA-2-methylthio-N(6)-dimethylallyladenosine synthase (474 aa).

The MTTase N-terminal domain maps to 3-120; it reads KKLHIKTWGC…LPEMIEQVRR (118 aa). The [4Fe-4S] cluster site is built by cysteine 12, cysteine 49, cysteine 83, cysteine 157, cysteine 161, and cysteine 164. In terms of domain architecture, Radical SAM core spans 143–375; that stretch reads RAEGPTAFVS…QDRITQQAMR (233 aa). The TRAM domain occupies 378 to 441; it reads RHMMGTVQRI…TNSLRGVFIR (64 aa).

Belongs to the methylthiotransferase family. MiaB subfamily. As to quaternary structure, monomer. [4Fe-4S] cluster is required as a cofactor.

Its subcellular location is the cytoplasm. It carries out the reaction N(6)-dimethylallyladenosine(37) in tRNA + (sulfur carrier)-SH + AH2 + 2 S-adenosyl-L-methionine = 2-methylsulfanyl-N(6)-dimethylallyladenosine(37) in tRNA + (sulfur carrier)-H + 5'-deoxyadenosine + L-methionine + A + S-adenosyl-L-homocysteine + 2 H(+). In terms of biological role, catalyzes the methylthiolation of N6-(dimethylallyl)adenosine (i(6)A), leading to the formation of 2-methylthio-N6-(dimethylallyl)adenosine (ms(2)i(6)A) at position 37 in tRNAs that read codons beginning with uridine. The polypeptide is tRNA-2-methylthio-N(6)-dimethylallyladenosine synthase (Shewanella baltica (strain OS185)).